The primary structure comprises 275 residues: Putative protein A464R (275 aa).

The 125-residue stretch at 51 to 175 (KEDVEYLIGM…LMGAIYFDLG (125 aa)) folds into the RNase III domain. One can recognise a DRBM domain in the interval 201–269 (NYKDRLLKHT…SKIALHTMGV (69 aa)).

It belongs to the ribonuclease III family.

The protein is Putative protein A464R of Chlorella (PBCV-1).